We begin with the raw amino-acid sequence, 95 residues long: ESAT-6-like protein EsxC (95 aa).

Belongs to the WXG100 family. ESAT-6 subfamily.

It is found in the secreted. The chain is ESAT-6-like protein EsxC from Mycobacterium tuberculosis (strain CDC 1551 / Oshkosh).